The following is a 63-amino-acid chain: Cytochrome c oxidase subunit 5A, mitochondrial (63 aa).

Belongs to the cytochrome c oxidase subunit 5A family. As to quaternary structure, component of the cytochrome c oxidase (complex IV, CIV), a multisubunit enzyme composed of a catalytic core of 3 subunits and several supernumerary subunits. The complex exists as a monomer or a dimer and forms supercomplexes (SCs) in the inner mitochondrial membrane with ubiquinol-cytochrome c oxidoreductase (cytochrome b-c1 complex, complex III, CIII).

It is found in the mitochondrion inner membrane. Its pathway is energy metabolism; oxidative phosphorylation. In terms of biological role, component of the cytochrome c oxidase, the last enzyme in the mitochondrial electron transport chain which drives oxidative phosphorylation. The respiratory chain contains 3 multisubunit complexes succinate dehydrogenase (complex II, CII), ubiquinol-cytochrome c oxidoreductase (cytochrome b-c1 complex, complex III, CIII) and cytochrome c oxidase (complex IV, CIV), that cooperate to transfer electrons derived from NADH and succinate to molecular oxygen, creating an electrochemical gradient over the inner membrane that drives transmembrane transport and the ATP synthase. Cytochrome c oxidase is the component of the respiratory chain that catalyzes the reduction of oxygen to water. Electrons originating from reduced cytochrome c in the intermembrane space (IMS) are transferred via the dinuclear copper A center (CU(A)) of subunit 2 and heme A of subunit 1 to the active site in subunit 1, a binuclear center (BNC) formed by heme A3 and copper B (CU(B)). The BNC reduces molecular oxygen to 2 water molecules using 4 electrons from cytochrome c in the IMS and 4 protons from the mitochondrial matrix. This is Cytochrome c oxidase subunit 5A, mitochondrial (COVA) from Manduca sexta (Tobacco hawkmoth).